We begin with the raw amino-acid sequence, 285 residues long: Nucleotide-binding protein PSPTO_4456 (285 aa).

Residue 8–15 coordinates ATP; it reads GRSGSGKS. 60 to 63 serves as a coordination point for GTP; it reads DARN.

This sequence belongs to the RapZ-like family.

In terms of biological role, displays ATPase and GTPase activities. This is Nucleotide-binding protein PSPTO_4456 from Pseudomonas syringae pv. tomato (strain ATCC BAA-871 / DC3000).